A 130-amino-acid polypeptide reads, in one-letter code: UPF0251 protein MmarC5_0986 (130 aa).

This sequence belongs to the UPF0251 family.

The polypeptide is UPF0251 protein MmarC5_0986 (Methanococcus maripaludis (strain C5 / ATCC BAA-1333)).